Here is a 260-residue protein sequence, read N- to C-terminus: MQNTLLRTYINSPLEQFEVKTFLGLNTPFIDLSGLNITTFTLYTIIVLLVVSSLYVLSNNNNKIIGSRWLLSQEVIYDTILNMVKGQIKGKDWGYYFPFIYTLFMFILISNLISMIPYSYALTAQFVFIISLSMIIWLGITILSLFKHGWVFFSLFVPSGTALPLVPLLVVIELLSYVARAFSLGLRLSANIFSGHLLMAILAGLTMTFVQINIFTLILGFIPLAIILIIMCLEFGIAIIQAYVFSILASSYLKDGLYLH.

The propeptide at 1 to 11 (MQNTLLRTYIN) is removed in mature form. 6 helical membrane passes run 37-57 (ITTFTLYTIIVLLVVSSLYVL), 96-116 (YFPFIYTLFMFILISNLISMI), 126-146 (FVFIISLSMIIWLGITILSLF), 152-172 (FFSLFVPSGTALPLVPLLVVI), 192-212 (IFSGHLLMAILAGLTMTFVQI), and 217-237 (LILGFIPLAIILIIMCLEFGI).

The protein belongs to the ATPase A chain family. F-type ATPases have 2 components, CF(1) - the catalytic core - and CF(0) - the membrane proton channel. CF(1) has five subunits: alpha(3), beta(3), gamma(1), delta(1), epsilon(1). CF(0) has three main subunits: a, b and c.

Its subcellular location is the mitochondrion inner membrane. Mitochondrial membrane ATP synthase (F(1)F(0) ATP synthase or Complex V) produces ATP from ADP in the presence of a proton gradient across the membrane which is generated by electron transport complexes of the respiratory chain. F-type ATPases consist of two structural domains, F(1) - containing the extramembraneous catalytic core and F(0) - containing the membrane proton channel, linked together by a central stalk and a peripheral stalk. During catalysis, ATP synthesis in the catalytic domain of F(1) is coupled via a rotary mechanism of the central stalk subunits to proton translocation. Key component of the proton channel; it may play a direct role in the translocation of protons across the membrane. The chain is ATP synthase subunit a (ATP6) from Candida glabrata (strain ATCC 2001 / BCRC 20586 / JCM 3761 / NBRC 0622 / NRRL Y-65 / CBS 138) (Yeast).